A 221-amino-acid polypeptide reads, in one-letter code: GTP-binding nuclear protein Ran-B1 (221 aa).

The region spanning 10-174 (DYPSFKLVIV…LYLARKLAGD (165 aa)) is the Small GTPase Ran-type domain. 21-28 (DGGTGKTT) is a binding site for GTP. The switch-I stretch occupies residues 40-48 (KKYEPTIGV). Residues G71, 125–128 (NKVD), and 153–155 (SAK) contribute to the GTP site. The interval 71-87 (GQEKFGGLRDGYYIHGQ) is switch-II.

The protein belongs to the small GTPase superfamily. Ran family. In terms of assembly, found in a nuclear export complex with RanGTP, exportin and pre-miRNA.

It is found in the nucleus. Functionally, GTP-binding protein involved in nucleocytoplasmic transport. Required for the import of protein into the nucleus and also for RNA export. Involved in chromatin condensation and control of cell cycle. In Nicotiana tabacum (Common tobacco), this protein is GTP-binding nuclear protein Ran-B1 (RAN-B1).